A 270-amino-acid chain; its full sequence is 4-hydroxy-tetrahydrodipicolinate reductase (270 aa).

Residues 9–14 and Glu35 each bind NAD(+); that span reads GAGGRM. Arg36 lines the NADP(+) pocket. Residues 99 to 101 and 123 to 126 contribute to the NAD(+) site; these read GTT and ASNF. His156 acts as the Proton donor/acceptor in catalysis. His157 is a binding site for (S)-2,3,4,5-tetrahydrodipicolinate. Lys160 acts as the Proton donor in catalysis. A (S)-2,3,4,5-tetrahydrodipicolinate-binding site is contributed by 166 to 167; the sequence is GT.

The protein belongs to the DapB family.

It is found in the cytoplasm. It catalyses the reaction (S)-2,3,4,5-tetrahydrodipicolinate + NAD(+) + H2O = (2S,4S)-4-hydroxy-2,3,4,5-tetrahydrodipicolinate + NADH + H(+). The catalysed reaction is (S)-2,3,4,5-tetrahydrodipicolinate + NADP(+) + H2O = (2S,4S)-4-hydroxy-2,3,4,5-tetrahydrodipicolinate + NADPH + H(+). It participates in amino-acid biosynthesis; L-lysine biosynthesis via DAP pathway; (S)-tetrahydrodipicolinate from L-aspartate: step 4/4. Functionally, catalyzes the conversion of 4-hydroxy-tetrahydrodipicolinate (HTPA) to tetrahydrodipicolinate. This Haemophilus influenzae (strain 86-028NP) protein is 4-hydroxy-tetrahydrodipicolinate reductase.